The following is a 493-amino-acid chain: UPF0699 transmembrane protein YdbT (493 aa).

The next 6 helical transmembrane spans lie at 18–38, 46–66, 188–208, 232–252, 370–390, and 393–413; these read CHTI…VYIV, FYGA…SIIK, LMAA…FALI, IGIY…FSIA, VIFS…WGYL, and ILLP…AWTI.

Belongs to the UPF0699 family.

It is found in the cell membrane. In Bacillus subtilis (strain 168), this protein is UPF0699 transmembrane protein YdbT (ydbT).